A 302-amino-acid polypeptide reads, in one-letter code: Nucleotide-binding protein RHOS4_02640 (302 aa).

An ATP-binding site is contributed by Gly-15 to Thr-22. A GTP-binding site is contributed by Asp-62–Asn-65.

Belongs to the RapZ-like family.

Its function is as follows. Displays ATPase and GTPase activities. The protein is Nucleotide-binding protein RHOS4_02640 of Cereibacter sphaeroides (strain ATCC 17023 / DSM 158 / JCM 6121 / CCUG 31486 / LMG 2827 / NBRC 12203 / NCIMB 8253 / ATH 2.4.1.) (Rhodobacter sphaeroides).